The primary structure comprises 325 residues: Xylosidase/arabinosidase (325 aa).

Residue Asp-16 is the Proton acceptor of the active site. The active-site Proton donor is the Glu-224.

It belongs to the glycosyl hydrolase 43 family.

It catalyses the reaction Hydrolysis of (1-&gt;4)-beta-D-xylans, to remove successive D-xylose residues from the non-reducing termini.. It carries out the reaction Hydrolysis of terminal non-reducing alpha-L-arabinofuranoside residues in alpha-L-arabinosides.. In Bacteroides ovatus, this protein is Xylosidase/arabinosidase (xsa).